The primary structure comprises 369 residues: Biglycan (369 aa).

The signal sequence occupies residues 1–16; it reads MCPLWLLAALLALSQA. A propeptide spanning residues 17 to 37 is cleaved from the precursor; sequence LPFEQKAFWDFTLDDGLPMLN. 2 O-linked (Xyl...) (glycosaminoglycan) serine glycosylation sites follow: Ser42 and Ser48. 2 disulfide bridges follow: Cys64–Cys70 and Cys68–Cys77. LRR repeat units follow at residues 83–103, 104–127, 128–151, 152–172, 173–196, 197–221, 222–242, 243–266, 267–290, 291–313, 314–343, and 344–369; these read KAVPKEISPDTTLLDLQNNDI, SELRKDDFKGLQHLYALVLVNNKI, SKIHEKAFSPLRKLQKLYISKNHL, VEIPPNLPSSLVELRIHDNRI, RKVPKGVFSGLRNMNCIEMGGNPL, ENSGFEPGAFDGLKLNYLRISEAKL, TGIPKDLPETLNELHLDHNKI, QAIELEDLLRYSKLYRLGLGHNQI, RMIENGSLSFLPTLRELHLDNNKL, SRVPAGLPDLKLLQVVYLHTNNI, TKVGVNDFCPVGFGVKRAYYNGISLFNNPV, and PYWEVQPATFRCVTDRLAIQFGNYKK. Residues Asn271 and Asn312 are each glycosylated (N-linked (GlcNAc...) asparagine). Residues Cys322 and Cys355 are joined by a disulfide bond.

Belongs to the small leucine-rich proteoglycan (SLRP) family. SLRP class I subfamily. Homodimer. Forms a ternary complex with MFAP2 and ELN. The two attached glycosaminoglycan chains can be either chondroitin sulfate or dermatan sulfate. In terms of tissue distribution, found in several connective tissues, especially in articular cartilages.

It is found in the secreted. It localises to the extracellular space. The protein resides in the extracellular matrix. Its function is as follows. May be involved in collagen fiber assembly. This is Biglycan (BGN) from Ovis aries (Sheep).